An 85-amino-acid chain; its full sequence is Putative defensin-like protein 258 (85 aa).

An N-terminal signal peptide occupies residues 1-25 (MINVSLKRSLLIFISVITSNIGSEA). Disulfide bonds link C57-C75, C63-C82, and C67-C84.

The protein belongs to the DEFL family.

It is found in the secreted. This Arabidopsis thaliana (Mouse-ear cress) protein is Putative defensin-like protein 258.